The chain runs to 506 residues: Maturase K (506 aa).

This sequence belongs to the intron maturase 2 family. MatK subfamily.

It localises to the plastid. The protein localises to the chloroplast. Its function is as follows. Usually encoded in the trnK tRNA gene intron. Probably assists in splicing its own and other chloroplast group II introns. The sequence is that of Maturase K from Prunus dulcis (Almond).